We begin with the raw amino-acid sequence, 709 residues long: MATTSLDLAKVRNIGIMAHIDAGKTTTTERILFYTGVSYKIGEVHDGAATMDWMEQEQERGITITSAATTCHWPLEDNDYTINIIDTPGHVDFTVEVERSLRVLDGAVTVFDGVAGVEPQSETVWRQADRYGVPRICFVNKLDRTGAEFHRCVDMIKDRLGAVPIIMQLPIGAEMDFKGVVDLVRMKALVWSAEAAKGEMYDVVDIPATHAEAAEEYRGKLVETVAENDDEIMELFLEGQEPTEEQLYAAIRRITIASGKGDGVTVTPVFCGTAFKNKGVQPLLDAVVRYLPTPLDVEAIEGHDVKDPEVVVKRKPSEDEPLSALAFKIMSDPHLGKLTFVRVYSGRLESGTAVLNSVKGKKERIGKIYRMHANKREEIEAVGAGDIVAVMGLKQTTTGETLSDDKNPVILESMDFPAPVIQVAIEPKSKGDQEKLGVAIQRLAEEDPSFQVHSDEETGQTIIGGMGELHLEVLVDRMRREFKVEANVGKPQVAYRETIRKTVERVDYTHKKQTGGTGQFAKVQIAIEPITETDGPAYEFVNKVTGGRIPREYIPSVDAGAQEAMQFGILAGYEMTGVRVTLLDGAYHEVDSSELAFKIAGSQAFKEAARKASPVLLEPMMAVEVTTPEESMGDVIGDLNSRRGQIQAMEERSGARVVKGLVPLSEMFGYVGDLRSKTSGRASYSMQFDSYAEVPRNVAEEIIAKAKGE.

One can recognise a tr-type G domain in the interval 9–295; the sequence is AKVRNIGIMA…AVVRYLPTPL (287 aa). Residues 18-25, 86-90, and 140-143 each bind GTP; these read AHIDAGKT, DTPGH, and NKLD.

This sequence belongs to the TRAFAC class translation factor GTPase superfamily. Classic translation factor GTPase family. EF-G/EF-2 subfamily.

It localises to the cytoplasm. Catalyzes the GTP-dependent ribosomal translocation step during translation elongation. During this step, the ribosome changes from the pre-translocational (PRE) to the post-translocational (POST) state as the newly formed A-site-bound peptidyl-tRNA and P-site-bound deacylated tRNA move to the P and E sites, respectively. Catalyzes the coordinated movement of the two tRNA molecules, the mRNA and conformational changes in the ribosome. This Streptomyces avermitilis (strain ATCC 31267 / DSM 46492 / JCM 5070 / NBRC 14893 / NCIMB 12804 / NRRL 8165 / MA-4680) protein is Elongation factor G.